A 491-amino-acid polypeptide reads, in one-letter code: Glutamate--tRNA ligase (491 aa).

Residues 13–23 (PSPTGFLHIGN) carry the 'HIGH' region motif. Positions 110, 112, 137, and 139 each coordinate Zn(2+). Positions 254 to 258 (KLSKR) match the 'KMSKS' region motif. Lys257 provides a ligand contact to ATP.

Belongs to the class-I aminoacyl-tRNA synthetase family. Glutamate--tRNA ligase type 1 subfamily. Monomer. The cofactor is Zn(2+).

The protein resides in the cytoplasm. The catalysed reaction is tRNA(Glu) + L-glutamate + ATP = L-glutamyl-tRNA(Glu) + AMP + diphosphate. Catalyzes the attachment of glutamate to tRNA(Glu) in a two-step reaction: glutamate is first activated by ATP to form Glu-AMP and then transferred to the acceptor end of tRNA(Glu). The protein is Glutamate--tRNA ligase of Listeria welshimeri serovar 6b (strain ATCC 35897 / DSM 20650 / CCUG 15529 / CIP 8149 / NCTC 11857 / SLCC 5334 / V8).